The following is a 446-amino-acid chain: tRNA-2-methylthio-N(6)-dimethylallyladenosine synthase (446 aa).

Residues 2-122 form the MTTase N-terminal domain; that stretch reads KKAYVKSYGC…LPDLLRQSRE (121 aa). The [4Fe-4S] cluster site is built by Cys-11, Cys-47, Cys-85, Cys-157, Cys-161, and Cys-164. Positions 143–375 constitute a Radical SAM core domain; the sequence is RNRGVTGFLT…QQLLDQQRHA (233 aa). The 63-residue stretch at 378-440 folds into the TRAM domain; sequence AAAVGTVAEI…SNSLFGEVLE (63 aa).

This sequence belongs to the methylthiotransferase family. MiaB subfamily. As to quaternary structure, monomer. The cofactor is [4Fe-4S] cluster.

Its subcellular location is the cytoplasm. The catalysed reaction is N(6)-dimethylallyladenosine(37) in tRNA + (sulfur carrier)-SH + AH2 + 2 S-adenosyl-L-methionine = 2-methylsulfanyl-N(6)-dimethylallyladenosine(37) in tRNA + (sulfur carrier)-H + 5'-deoxyadenosine + L-methionine + A + S-adenosyl-L-homocysteine + 2 H(+). Its function is as follows. Catalyzes the methylthiolation of N6-(dimethylallyl)adenosine (i(6)A), leading to the formation of 2-methylthio-N6-(dimethylallyl)adenosine (ms(2)i(6)A) at position 37 in tRNAs that read codons beginning with uridine. This is tRNA-2-methylthio-N(6)-dimethylallyladenosine synthase from Methylorubrum populi (strain ATCC BAA-705 / NCIMB 13946 / BJ001) (Methylobacterium populi).